Consider the following 105-residue polypeptide: Large ribosomal subunit protein bL21 (105 aa).

It belongs to the bacterial ribosomal protein bL21 family. In terms of assembly, part of the 50S ribosomal subunit. Contacts protein L20.

Its function is as follows. This protein binds to 23S rRNA in the presence of protein L20. The sequence is that of Large ribosomal subunit protein bL21 from Parafrankia sp. (strain EAN1pec).